The following is a 66-amino-acid chain: Beta-defensin 134 (66 aa).

The first 19 residues, 1 to 19 (MKPLLVVFVFLFLWDPVLA), serve as a signal peptide directing secretion. Intrachain disulfides connect Cys-32/Cys-58, Cys-38/Cys-52, and Cys-42/Cys-59.

Belongs to the beta-defensin family.

It localises to the secreted. Functionally, has antibacterial activity. This is Beta-defensin 134 (DEFB134) from Homo sapiens (Human).